We begin with the raw amino-acid sequence, 619 residues long: Dihydroxy-acid dehydratase (619 aa).

Aspartate 81 contributes to the Mg(2+) binding site. Residue cysteine 122 coordinates [2Fe-2S] cluster. The Mg(2+) site is built by aspartate 123 and lysine 124. At lysine 124 the chain carries N6-carboxylysine. Cysteine 195 provides a ligand contact to [2Fe-2S] cluster. Glutamate 494 is a binding site for Mg(2+). Serine 520 (proton acceptor) is an active-site residue.

It belongs to the IlvD/Edd family. Homodimer. [2Fe-2S] cluster serves as cofactor. Mg(2+) is required as a cofactor.

The enzyme catalyses (2R)-2,3-dihydroxy-3-methylbutanoate = 3-methyl-2-oxobutanoate + H2O. It carries out the reaction (2R,3R)-2,3-dihydroxy-3-methylpentanoate = (S)-3-methyl-2-oxopentanoate + H2O. Its pathway is amino-acid biosynthesis; L-isoleucine biosynthesis; L-isoleucine from 2-oxobutanoate: step 3/4. It participates in amino-acid biosynthesis; L-valine biosynthesis; L-valine from pyruvate: step 3/4. In terms of biological role, functions in the biosynthesis of branched-chain amino acids. Catalyzes the dehydration of (2R,3R)-2,3-dihydroxy-3-methylpentanoate (2,3-dihydroxy-3-methylvalerate) into 2-oxo-3-methylpentanoate (2-oxo-3-methylvalerate) and of (2R)-2,3-dihydroxy-3-methylbutanoate (2,3-dihydroxyisovalerate) into 2-oxo-3-methylbutanoate (2-oxoisovalerate), the penultimate precursor to L-isoleucine and L-valine, respectively. The protein is Dihydroxy-acid dehydratase of Shewanella sp. (strain ANA-3).